The primary structure comprises 621 residues: Amino-acid acetyltransferase, mitochondrial (621 aa).

The N-terminal 77 residues, 1–77 (MIPRAPPSTQ…RSYLASFGVQ (77 aa)), are a transit peptide targeting the mitochondrion. Residues 213 to 233 (PKPGSEEESEPGFSPPETHIY) are disordered. The N-acetyltransferase domain occupies 424–600 (LPIRVVRSVS…GSAGLSFIED (177 aa)).

This sequence belongs to the acetyltransferase family.

The protein resides in the mitochondrion. The catalysed reaction is L-glutamate + acetyl-CoA = N-acetyl-L-glutamate + CoA + H(+). It functions in the pathway amino-acid biosynthesis; L-arginine biosynthesis; N(2)-acetyl-L-ornithine from L-glutamate: step 1/4. Functionally, N-acetylglutamate synthase involved in arginine biosynthesis. The protein is Amino-acid acetyltransferase, mitochondrial (ARG2) of Coprinopsis cinerea (strain Okayama-7 / 130 / ATCC MYA-4618 / FGSC 9003) (Inky cap fungus).